Consider the following 309-residue polypeptide: Tyrosine recombinase XerD (309 aa).

One can recognise a Core-binding (CB) domain in the interval 3–88 (MRASLAIENF…ALRQFFRFLY (86 aa)). The 194-residue stretch at 109 to 302 (PLPKIMSVEN…LEERLHKLVS (194 aa)) folds into the Tyr recombinase domain. Active-site residues include Arg158, Lys182, His254, Arg257, and His280. Tyr289 acts as the O-(3'-phospho-DNA)-tyrosine intermediate in catalysis.

It belongs to the 'phage' integrase family. XerD subfamily. Forms a cyclic heterotetrameric complex composed of two molecules of XerC and two molecules of XerD.

Its subcellular location is the cytoplasm. Functionally, site-specific tyrosine recombinase, which acts by catalyzing the cutting and rejoining of the recombining DNA molecules. The XerC-XerD complex is essential to convert dimers of the bacterial chromosome into monomers to permit their segregation at cell division. It also contributes to the segregational stability of plasmids. This Brucella melitensis biotype 1 (strain ATCC 23456 / CCUG 17765 / NCTC 10094 / 16M) protein is Tyrosine recombinase XerD.